An 80-amino-acid chain; its full sequence is Cell division activator CedA (80 aa).

It belongs to the CedA family.

Activates the cell division inhibited by chromosomal DNA over-replication. The chain is Cell division activator CedA from Salmonella arizonae (strain ATCC BAA-731 / CDC346-86 / RSK2980).